A 345-amino-acid polypeptide reads, in one-letter code: Leucine-rich repeat and transmembrane domain-containing protein 1 (345 aa).

Positions 1–27 (MKGELLLFSSVIVLLQVVCSCPDKCYC) are cleaved as a signal peptide. Residues 28-50 (QSSTNFVDCSQQGLAEIPSHLPP) form the LRRNT domain. Over 28–288 (QSSTNFVDCS…PANLRHAIAT (261 aa)) the chain is Extracellular. 5 LRR repeats span residues 51 to 72 (QTRT…AFRS), 75 to 96 (WLMT…AFHG), 99 to 120 (HLQV…LFHS), 123 to 144 (QLRE…LGET), and 147 to 168 (NLTI…LLES). N-linked (GlcNAc...) asparagine glycosylation is present at Asn-104. An N-linked (GlcNAc...) asparagine glycan is attached at Asn-147. One can recognise an LRRCT domain in the interval 180-234 (NLWKCNCHLLGLKLWLEKFVYKGGLTDGIICESPDTWKGKDLLRIPHELYQPCPL). A helical transmembrane segment spans residues 289 to 309 (VIITGVVCGIVCLMMLAAAIY). The Cytoplasmic segment spans residues 310–345 (GCTYAAITAQYHGGPLAQTNDPGKVEEKERFDSSPA). The interval 326-345 (AQTNDPGKVEEKERFDSSPA) is disordered. Positions 332–345 (GKVEEKERFDSSPA) are enriched in basic and acidic residues.

It is found in the membrane. The sequence is that of Leucine-rich repeat and transmembrane domain-containing protein 1 (LRTM1) from Homo sapiens (Human).